The primary structure comprises 267 residues: 5'-nucleotidase SurE (267 aa).

4 residues coordinate a divalent metal cation: D14, D15, S45, and N100.

The protein belongs to the SurE nucleotidase family. A divalent metal cation serves as cofactor.

The protein localises to the cytoplasm. The catalysed reaction is a ribonucleoside 5'-phosphate + H2O = a ribonucleoside + phosphate. Functionally, nucleotidase that shows phosphatase activity on nucleoside 5'-monophosphates. The protein is 5'-nucleotidase SurE of Methanosarcina barkeri (strain Fusaro / DSM 804).